Here is a 119-residue protein sequence, read N- to C-terminus: Protein yippee-like 3 (119 aa).

A Yippee domain is found at 19 to 116 (RRYSCAHCRA…IELNHMIKDN (98 aa)). Zn(2+)-binding residues include cysteine 23, cysteine 26, cysteine 79, and cysteine 82.

It belongs to the yippee family. In terms of processing, probably ubiquitinated leading to its degradation by the proteasome.

It is found in the nucleus. It localises to the nucleolus. In terms of biological role, involved in proliferation and apoptosis in myeloid precursor cells. The sequence is that of Protein yippee-like 3 (YPEL3) from Bos taurus (Bovine).